Here is a 915-residue protein sequence, read N- to C-terminus: Rab3 GTPase-activating protein catalytic subunit (915 aa).

This sequence belongs to the Rab3-GAP catalytic subunit family. As to quaternary structure, the Rab3 GTPase-activating complex is a heterodimer composed of rbg-1 and rbg-2.

Its subcellular location is the cytoplasm. Probable catalytic subunit of a GTPase activating protein that has specificity for Rab3 subfamily. Rab3 proteins are involved in regulated exocytosis of neurotransmitters and hormones. Specifically converts active Rab3-GTP to the inactive form Rab3-GDP. The polypeptide is Rab3 GTPase-activating protein catalytic subunit (rbg-1) (Caenorhabditis elegans).